We begin with the raw amino-acid sequence, 149 residues long: Small ribosomal subunit protein uS17c (149 aa).

Residues 1 to 49 (MITSSLTSSLQALKLSSPFAHGSTPLSSLSKPNSFPNHRMPALVPVIRA) constitute a chloroplast transit peptide.

The protein belongs to the universal ribosomal protein uS17 family. In terms of assembly, part of the 30S ribosomal subunit.

It localises to the plastid. Its subcellular location is the chloroplast. In terms of biological role, one of the primary rRNA binding proteins, it binds specifically to the 5'-end of 16S ribosomal RNA. Required for optimal plastid performance in terms of photosynthesis and growth. Required for the translation of plastid mRNAs. Plays a critical role in biosynthesis of thylakoid membrane proteins encoded by chloroplast genes. This chain is Small ribosomal subunit protein uS17c (RPS17), found in Arabidopsis thaliana (Mouse-ear cress).